The chain runs to 135 residues: U-scoloptoxin(22)-Er1a (135 aa).

Residues M1–G24 form the signal peptide. Positions P61–I135 are disordered. Residues S75 to S127 are compositionally biased toward basic and acidic residues.

The protein belongs to the scoloptoxin-22 family. In terms of tissue distribution, expressed by the venom gland.

It localises to the secreted. This Ethmostigmus rubripes (Giant centipede) protein is U-scoloptoxin(22)-Er1a.